A 715-amino-acid polypeptide reads, in one-letter code: Fatty acid oxidation complex subunit alpha (715 aa).

Residues 1-190 (MTTTSAFMLN…KAGLVDDVVP (190 aa)) form an enoyl-CoA hydratase region. Residues 306 to 714 (GPLNSVGILG…FWTNGETDQG (409 aa)) are 3-hydroxyacyl-CoA dehydrogenase.

The protein in the N-terminal section; belongs to the enoyl-CoA hydratase/isomerase family. It in the central section; belongs to the 3-hydroxyacyl-CoA dehydrogenase family. As to quaternary structure, heterotetramer of two alpha chains (FadJ) and two beta chains (FadI).

It is found in the cytoplasm. The enzyme catalyses a (3S)-3-hydroxyacyl-CoA = a (2E)-enoyl-CoA + H2O. It catalyses the reaction a 4-saturated-(3S)-3-hydroxyacyl-CoA = a (3E)-enoyl-CoA + H2O. The catalysed reaction is a (3S)-3-hydroxyacyl-CoA + NAD(+) = a 3-oxoacyl-CoA + NADH + H(+). It carries out the reaction (3S)-3-hydroxybutanoyl-CoA = (3R)-3-hydroxybutanoyl-CoA. The protein operates within lipid metabolism; fatty acid beta-oxidation. In terms of biological role, catalyzes the formation of a hydroxyacyl-CoA by addition of water on enoyl-CoA. Also exhibits 3-hydroxyacyl-CoA epimerase and 3-hydroxyacyl-CoA dehydrogenase activities. The chain is Fatty acid oxidation complex subunit alpha from Salmonella typhimurium (strain LT2 / SGSC1412 / ATCC 700720).